A 562-amino-acid chain; its full sequence is Matrix metalloproteinase-25 (562 aa).

Positions 1–21 (MRLRLRLLALLLLLLAPPARA) are cleaved as a signal peptide. Positions 22–107 (PKPSAQDVSL…VAGLVRRRRR (86 aa)) are excised as a propeptide. The short motif at 88–95 (PRCSLPDV) is the Cysteine switch element. 2 residues coordinate Zn(2+): Cys-90 and His-233. The active site involves Glu-234. Zn(2+) is bound by residues His-237 and His-243. The tract at residues 278–313 (LYGKAPQTPYDKPTRKPLAPPPQPPASPTHSPSFPI) is disordered. The segment covering 295–304 (LAPPPQPPAS) has biased composition (pro residues). Hemopexin repeat units follow at residues 314–363 (PDRC…WEGL), 367–412 (VRVV…GLPP), 413–461 (GEEV…EGAP), and 462–508 (PSPD…WLDC). A disulfide bridge connects residues Cys-317 and Cys-508. Residues 490-526 (SIKTEPDAPQPMGPNWLDCPAPSSGPRAPRPPKATPV) are disordered. Residue Ala-539 is the site of GPI-anchor amidated alanine attachment. The propeptide at 540–562 (AGRWPAPIPLLLLPLLVGGVASR) is removed in mature form.

Belongs to the peptidase M10A family. Zn(2+) serves as cofactor. Ca(2+) is required as a cofactor. In terms of processing, the precursor is cleaved by a furin endopeptidase. In terms of tissue distribution, expressed predominantly in leukocytes, lung and spleen. Expressed also in colon carcinoma, astrocytoma and glioblastomas.

It localises to the cell membrane. The protein localises to the secreted. Its subcellular location is the extracellular space. It is found in the extracellular matrix. May activate progelatinase A. The chain is Matrix metalloproteinase-25 (MMP25) from Homo sapiens (Human).